Reading from the N-terminus, the 152-residue chain is uncharacterized protein (152 aa).

It belongs to the antirestriction protein family.

This is an uncharacterized protein from Escherichia coli (strain K12).